A 365-amino-acid polypeptide reads, in one-letter code: tRNA/tmRNA (uracil-C(5))-methyltransferase (365 aa).

S-adenosyl-L-methionine is bound by residues Gln-189, Tyr-217, Asn-222, Glu-238, and Asp-298. Catalysis depends on Cys-323, which acts as the Nucleophile. Residue Glu-357 is the Proton acceptor of the active site.

The protein belongs to the class I-like SAM-binding methyltransferase superfamily. RNA M5U methyltransferase family. TrmA subfamily.

The catalysed reaction is uridine(54) in tRNA + S-adenosyl-L-methionine = 5-methyluridine(54) in tRNA + S-adenosyl-L-homocysteine + H(+). The enzyme catalyses uridine(341) in tmRNA + S-adenosyl-L-methionine = 5-methyluridine(341) in tmRNA + S-adenosyl-L-homocysteine + H(+). Its function is as follows. Dual-specificity methyltransferase that catalyzes the formation of 5-methyluridine at position 54 (m5U54) in all tRNAs, and that of position 341 (m5U341) in tmRNA (transfer-mRNA). In Psychromonas ingrahamii (strain DSM 17664 / CCUG 51855 / 37), this protein is tRNA/tmRNA (uracil-C(5))-methyltransferase.